Consider the following 395-residue polypeptide: Enolase (395 aa).

Substrate-binding residues include H136 and E145. The active-site Proton donor is the E188. Residues D223, E271, and D296 each coordinate Mg(2+). Substrate contacts are provided by E271 and D296. K321 acts as the Proton acceptor in catalysis. Substrate is bound by residues 348-351 (SHRS) and K372.

It belongs to the enolase family. As to quaternary structure, homodimer. The cofactor is Mg(2+).

The protein localises to the cytoplasm. It catalyses the reaction (2R)-2-phosphoglycerate = phosphoenolpyruvate + H2O. It participates in carbohydrate degradation; glycolysis; pyruvate from D-glyceraldehyde 3-phosphate: step 4/5. The chain is Enolase from Alligator mississippiensis (American alligator).